Reading from the N-terminus, the 285-residue chain is Complex I assembly factor TIMMDC1, mitochondrial (285 aa).

4 helical membrane passes run 80-100 (AAVS…FIYA), 137-159 (RWSW…LTVY), 165-185 (MSHF…NLGV), and 188-208 (LVAG…LLMA). Residues 265–285 (RIEELLSLPRNPSSPHQQSKH) are disordered. The segment covering 274 to 285 (RNPSSPHQQSKH) has biased composition (polar residues). Position 277 is a phosphoserine (serine 277).

Belongs to the Tim17/Tim22/Tim23 family. Associates with the intermediate 315 kDa subcomplex of incompletely assembled complex I. Interacts with TMEM70.

Its subcellular location is the mitochondrion membrane. Its function is as follows. Chaperone protein involved in the assembly of the mitochondrial NADH:ubiquinone oxidoreductase complex (complex I). Participates in constructing the membrane arm of complex I. The protein is Complex I assembly factor TIMMDC1, mitochondrial of Mus musculus (Mouse).